A 151-amino-acid chain; its full sequence is Large ribosomal subunit protein bL9 (151 aa).

This sequence belongs to the bacterial ribosomal protein bL9 family.

In terms of biological role, binds to the 23S rRNA. In Desulfotalea psychrophila (strain LSv54 / DSM 12343), this protein is Large ribosomal subunit protein bL9.